The chain runs to 704 residues: Elongation factor G (704 aa).

Residues 10–290 (NKVRNIGIMA…AVIDYLPSPL (281 aa)) enclose the tr-type G domain. GTP contacts are provided by residues 19 to 26 (AHIDAGKT), 83 to 87 (DTPGH), and 137 to 140 (NKMD).

This sequence belongs to the TRAFAC class translation factor GTPase superfamily. Classic translation factor GTPase family. EF-G/EF-2 subfamily.

It localises to the cytoplasm. Its function is as follows. Catalyzes the GTP-dependent ribosomal translocation step during translation elongation. During this step, the ribosome changes from the pre-translocational (PRE) to the post-translocational (POST) state as the newly formed A-site-bound peptidyl-tRNA and P-site-bound deacylated tRNA move to the P and E sites, respectively. Catalyzes the coordinated movement of the two tRNA molecules, the mRNA and conformational changes in the ribosome. The protein is Elongation factor G of Clavibacter michiganensis subsp. michiganensis (strain NCPPB 382).